Consider the following 231-residue polypeptide: Sensory transduction protein BceR (231 aa).

Positions 3 to 116 constitute a Response regulatory domain; it reads KLLLIEDDES…VLIAKIQAMF (114 aa). Residue aspartate 52 is modified to 4-aspartylphosphate. Residues 127 to 225 constitute a DNA-binding region (ompR/PhoB-type); it reads STIKTWCGAA…KVGQGYIAKE (99 aa).

In terms of processing, phosphorylated by BceS.

It is found in the cytoplasm. In terms of biological role, member of the two-component regulatory system BceS/BceR involved in the regulation of bacitracin resistance. When activated by BceS, binds to the upstream region of the bceAB promoter and up-regulates the expression of these two genes. The polypeptide is Sensory transduction protein BceR (bceR) (Bacillus subtilis (strain 168)).